Here is a 219-residue protein sequence, read N- to C-terminus: Deoxyribose-phosphate aldolase (219 aa).

Asp88 serves as the catalytic Proton donor/acceptor. The active-site Schiff-base intermediate with acetaldehyde is the Lys150. The active-site Proton donor/acceptor is the Lys179.

The protein belongs to the DeoC/FbaB aldolase family. DeoC type 1 subfamily.

The protein localises to the cytoplasm. It catalyses the reaction 2-deoxy-D-ribose 5-phosphate = D-glyceraldehyde 3-phosphate + acetaldehyde. The protein operates within carbohydrate degradation; 2-deoxy-D-ribose 1-phosphate degradation; D-glyceraldehyde 3-phosphate and acetaldehyde from 2-deoxy-alpha-D-ribose 1-phosphate: step 2/2. Functionally, catalyzes a reversible aldol reaction between acetaldehyde and D-glyceraldehyde 3-phosphate to generate 2-deoxy-D-ribose 5-phosphate. This is Deoxyribose-phosphate aldolase from Aquifex aeolicus (strain VF5).